We begin with the raw amino-acid sequence, 250 residues long: Oil body-associated protein 2B (250 aa).

Positions Met-1–Val-29 are disordered. A compositionally biased stretch (low complexity) spans Pro-8 to Ala-18.

This sequence belongs to the OBAP family.

The protein is Oil body-associated protein 2B of Zea mays (Maize).